Consider the following 390-residue polypeptide: MAFDLAARLAERRAADLYRQRPLLESPQGPEVVVDGQRLLAFCSNDYLGLANHPEVISAWQAGAERWGVGGGASHLVVGHSTPHHQVEEALAELTGRPRALLFSTGYMANLGAITALVGQGDTVLQDRLNHASLLDGGLLSGARFNRYLHNDSASLASRLDKAVGNTLVVTDGVFSMDGDLADLPALADVARGRGAWLMVDDAHGLGTLGAQGGGIVEHFGLGVADVPVLIGTLGKACGTAGAFVAGSEDLIEALVQFARPYIYTTSQPPALACATLKSLELLRRETWRREHLAALIRQFREGAQQIGLQLMDSPTPIQPIVIGDSAQALRLSRMLRERGLLVTAIRPPTVPAGSARLRVTLSAAHSEAQVQLLLNALAECYPQLENADA.

Substrate is bound at residue Arg19. 106–107 (GY) is a binding site for pyridoxal 5'-phosphate. Residue His131 coordinates substrate. Residues Ser176, His204, and Thr233 each coordinate pyridoxal 5'-phosphate. An N6-(pyridoxal phosphate)lysine modification is found at Lys236. Thr350 contacts substrate.

It belongs to the class-II pyridoxal-phosphate-dependent aminotransferase family. BioF subfamily. In terms of assembly, homodimer. Requires pyridoxal 5'-phosphate as cofactor.

The enzyme catalyses 6-carboxyhexanoyl-[ACP] + L-alanine + H(+) = (8S)-8-amino-7-oxononanoate + holo-[ACP] + CO2. The protein operates within cofactor biosynthesis; biotin biosynthesis. Functionally, catalyzes the decarboxylative condensation of pimeloyl-[acyl-carrier protein] and L-alanine to produce 8-amino-7-oxononanoate (AON), [acyl-carrier protein], and carbon dioxide. The protein is 8-amino-7-oxononanoate synthase of Pseudomonas putida (strain GB-1).